The sequence spans 427 residues: NADH-quinone oxidoreductase subunit 14 (427 aa).

14 consecutive transmembrane segments (helical) span residues 1–21, 30–50, 57–77, 79–99, 104–124, 137–157, 172–192, 204–224, 230–250, 257–277, 280–300, 322–342, 360–380, and 400–420; these read MTLAILAVFSVALTLLGFVLP, LLGLALALASLLLTWGKPFAF, GVSQVFTLLALLGALWTVGLV, SGRFEFYLLVLYAALGMHLLA, LLLMLVALEALSLPLYALATW, FLLGALAAAFFLYGAALFYGA, YALALGLLLVGLGFKAALAPF, PTPVVLFMATSVKAAAFAALL, PEALALLVALSVVVGNLAALA, LLAYSSIAHAGYMALALYTGN, ALGFYLLTYVLATGLAFAVLS, LGLAFLVAMLSLLGLPPLAGF, VLVLALVTSAVSAYYYLGLGL, and AAVVAAGVLLLALGLLPGLVL.

Belongs to the complex I subunit 2 family. As to quaternary structure, NDH-1 is composed of 15 different subunits, Nqo1 to Nqo15. The complex has a L-shaped structure, with the hydrophobic arm (subunits Nqo7, Nqo8 and Nqo10 to Nqo14) embedded in the membrane and the hydrophilic peripheral arm (subunits Nqo1 to Nqo6, Nqo9 and Nqo15) protruding into the bacterial cytoplasm. The hydrophilic domain contains all the redox centers.

The protein resides in the cell inner membrane. The enzyme catalyses a quinone + NADH + 5 H(+)(in) = a quinol + NAD(+) + 4 H(+)(out). In terms of biological role, NDH-1 shuttles electrons from NADH, via FMN and iron-sulfur (Fe-S) centers, to quinones in the respiratory chain. The immediate electron acceptor for the enzyme in this species is menaquinone. Couples the redox reaction to proton translocation (for every two electrons transferred, four hydrogen ions are translocated across the cytoplasmic membrane), and thus conserves the redox energy in a proton gradient required for the synthesis of ATP. The protein is NADH-quinone oxidoreductase subunit 14 (nqo14) of Thermus thermophilus (strain ATCC 27634 / DSM 579 / HB8).